The primary structure comprises 392 residues: UDP-N-acetylglucosamine--N-acetylmuramyl-(pentapeptide) pyrophosphoryl-undecaprenol N-acetylglucosamine transferase (392 aa).

Residues 14 to 16 (TGG), asparagine 124, arginine 167, serine 195, isoleucine 251, and glutamine 296 contribute to the UDP-N-acetyl-alpha-D-glucosamine site.

Belongs to the glycosyltransferase 28 family. MurG subfamily.

It is found in the cell inner membrane. The catalysed reaction is di-trans,octa-cis-undecaprenyl diphospho-N-acetyl-alpha-D-muramoyl-L-alanyl-D-glutamyl-meso-2,6-diaminopimeloyl-D-alanyl-D-alanine + UDP-N-acetyl-alpha-D-glucosamine = di-trans,octa-cis-undecaprenyl diphospho-[N-acetyl-alpha-D-glucosaminyl-(1-&gt;4)]-N-acetyl-alpha-D-muramoyl-L-alanyl-D-glutamyl-meso-2,6-diaminopimeloyl-D-alanyl-D-alanine + UDP + H(+). Its pathway is cell wall biogenesis; peptidoglycan biosynthesis. Functionally, cell wall formation. Catalyzes the transfer of a GlcNAc subunit on undecaprenyl-pyrophosphoryl-MurNAc-pentapeptide (lipid intermediate I) to form undecaprenyl-pyrophosphoryl-MurNAc-(pentapeptide)GlcNAc (lipid intermediate II). This chain is UDP-N-acetylglucosamine--N-acetylmuramyl-(pentapeptide) pyrophosphoryl-undecaprenol N-acetylglucosamine transferase, found in Sphingopyxis alaskensis (strain DSM 13593 / LMG 18877 / RB2256) (Sphingomonas alaskensis).